The primary structure comprises 574 residues: 5'-nucleotidase (574 aa).

The first 26 residues, 1–26 (MCPRAARAPATLLLALGAVLWPAAGA), serve as a signal peptide directing secretion. The Zn(2+) site is built by D36 and H38. An intrachain disulfide couples C51 to C57. The N-linked (GlcNAc...) asparagine glycan is linked to N53. Zn(2+) is bound by residues D85, N117, H220, and H243. 2 N-linked (GlcNAc...) asparagine glycosylation sites follow: N311 and N333. 2 disulfides stabilise this stretch: C353–C358 and C365–C387. Position 354 (R354) interacts with AMP. R354 is an IMP binding site. 2 residues coordinate AMP: N390 and R395. IMP-binding residues include N390 and R395. N403 carries an N-linked (GlcNAc...) asparagine glycan. Residue F417 coordinates AMP. F417 contacts IMP. The cysteines at positions 476 and 479 are disulfide-linked. AMP-binding residues include F500 and D506. F500 and D506 together coordinate IMP. S549 carries GPI-anchor amidated serine lipidation. A propeptide spans 550-574 (TGSHCHGSFSLIFLSLWAVIFVLYQ) (removed in mature form).

It belongs to the 5'-nucleotidase family. As to quaternary structure, homodimer. The cofactor is Zn(2+).

The protein resides in the cell membrane. It carries out the reaction a ribonucleoside 5'-phosphate + H2O = a ribonucleoside + phosphate. The catalysed reaction is a 2'-deoxyribonucleoside 5'-phosphate + H2O = a 2'-deoxyribonucleoside + phosphate. The enzyme catalyses dTMP + H2O = thymidine + phosphate. It catalyses the reaction CMP + H2O = cytidine + phosphate. It carries out the reaction IMP + H2O = inosine + phosphate. The catalysed reaction is AMP + H2O = adenosine + phosphate. The enzyme catalyses GMP + H2O = guanosine + phosphate. It catalyses the reaction UMP + H2O = uridine + phosphate. It carries out the reaction dAMP + H2O = 2'-deoxyadenosine + phosphate. The catalysed reaction is dCMP + H2O = 2'-deoxycytidine + phosphate. Its activity is regulated as follows. Inhibited by adenosine 5'-(alpha,beta-methylene)-diphosphate (AMPCP). In terms of biological role, catalyzes the hydrolysis of nucleotide monophosphates, releasing inorganic phosphate and the corresponding nucleoside, with AMP being the preferred substrate. Shows a preference for ribonucleotide monophosphates over their equivalent deoxyribose forms. Other substrates include IMP, UMP, GMP, CMP, dAMP, dCMP, dTMP, NAD and NMN. The protein is 5'-nucleotidase (NT5E) of Homo sapiens (Human).